Here is an 856-residue protein sequence, read N- to C-terminus: Lon protease (856 aa).

The Lon N-terminal domain occupies 68 to 261 (FPVLPLRDIV…KVLGLMESEI (194 aa)). Position 412–419 (412–419 (GPPGVGKT)) interacts with ATP. In terms of domain architecture, Lon proteolytic spans 647-828 (EDQVGVVTGL…DEVLHHALLR (182 aa)). Catalysis depends on residues Ser734 and Lys777.

Belongs to the peptidase S16 family. Homohexamer. Organized in a ring with a central cavity.

Its subcellular location is the cytoplasm. The enzyme catalyses Hydrolysis of proteins in presence of ATP.. In terms of biological role, ATP-dependent serine protease that mediates the selective degradation of mutant and abnormal proteins as well as certain short-lived regulatory proteins. Required for cellular homeostasis and for survival from DNA damage and developmental changes induced by stress. Degrades polypeptides processively to yield small peptide fragments that are 5 to 10 amino acids long. Binds to DNA in a double-stranded, site-specific manner. This is Lon protease from Azorhizobium caulinodans (strain ATCC 43989 / DSM 5975 / JCM 20966 / LMG 6465 / NBRC 14845 / NCIMB 13405 / ORS 571).